The following is an 87-amino-acid chain: Keratin-associated protein 19-1 (87 aa).

Residues 6–72 (GYSGGLGYGY…SSYGGYGCGC (67 aa)) are 21 X 2 AA repeats of G-[YCGS].

Belongs to the KRTAP type 19 family. As to quaternary structure, interacts with hair keratins. As to expression, strong expression in narrowly defined pattern restricted to the lower and middle cortical regions of the hair shaft in both developing and cycling hair. During hair follicle regression (catagen), expression levels decrease until expression is no longer detectable in follicles at resting stage (telogen).

In the hair cortex, hair keratin intermediate filaments are embedded in an interfilamentous matrix, consisting of hair keratin-associated proteins (KRTAP), which are essential for the formation of a rigid and resistant hair shaft through their extensive disulfide bond cross-linking with abundant cysteine residues of hair keratins. The matrix proteins include the high-sulfur and high-glycine-tyrosine keratins. The sequence is that of Keratin-associated protein 19-1 (Krtap19-1) from Mus musculus (Mouse).